The chain runs to 406 residues: DNA primase DnaG (406 aa).

Residues 167-253 form the Toprim domain; the sequence is DAVVIVEGRA…CVEDLSRRTV (87 aa). Glutamate 173, aspartate 215, and aspartate 217 together coordinate Mg(2+). A disordered region spans residues 259 to 309; the sequence is NKTPASAAAPIATTQSETAATDGSATPAPTPEPAPDTAPSPDSDGDDTEAA. A compositionally biased stretch (low complexity) spans 261-272; sequence TPASAAAPIATT. Residues 286–296 are compositionally biased toward pro residues; that stretch reads APTPEPAPDTA.

Belongs to the archaeal DnaG primase family. In terms of assembly, forms a ternary complex with MCM helicase and DNA. The cofactor is Mg(2+).

The enzyme catalyses ssDNA + n NTP = ssDNA/pppN(pN)n-1 hybrid + (n-1) diphosphate.. In terms of biological role, RNA polymerase that catalyzes the synthesis of short RNA molecules used as primers for DNA polymerase during DNA replication. The sequence is that of DNA primase DnaG from Halobacterium salinarum (strain ATCC 29341 / DSM 671 / R1).